The sequence spans 135 residues: Ribosome-binding factor A (135 aa).

This sequence belongs to the RbfA family. Monomer. Binds 30S ribosomal subunits, but not 50S ribosomal subunits or 70S ribosomes.

Its subcellular location is the cytoplasm. One of several proteins that assist in the late maturation steps of the functional core of the 30S ribosomal subunit. Associates with free 30S ribosomal subunits (but not with 30S subunits that are part of 70S ribosomes or polysomes). Required for efficient processing of 16S rRNA. May interact with the 5'-terminal helix region of 16S rRNA. This chain is Ribosome-binding factor A, found in Novosphingobium aromaticivorans (strain ATCC 700278 / DSM 12444 / CCUG 56034 / CIP 105152 / NBRC 16084 / F199).